The chain runs to 156 residues: Small ribosomal subunit protein uS7 (156 aa).

Belongs to the universal ribosomal protein uS7 family. As to quaternary structure, part of the 30S ribosomal subunit. Contacts proteins S9 and S11.

Its function is as follows. One of the primary rRNA binding proteins, it binds directly to 16S rRNA where it nucleates assembly of the head domain of the 30S subunit. Is located at the subunit interface close to the decoding center, probably blocks exit of the E-site tRNA. This is Small ribosomal subunit protein uS7 from Campylobacter jejuni subsp. jejuni serotype O:6 (strain 81116 / NCTC 11828).